The primary structure comprises 479 residues: Glycogen synthase (479 aa).

Lys-15 contacts ADP-alpha-D-glucose.

The protein belongs to the glycosyltransferase 1 family. Bacterial/plant glycogen synthase subfamily.

It carries out the reaction [(1-&gt;4)-alpha-D-glucosyl](n) + ADP-alpha-D-glucose = [(1-&gt;4)-alpha-D-glucosyl](n+1) + ADP + H(+). The protein operates within glycan biosynthesis; glycogen biosynthesis. Its function is as follows. Synthesizes alpha-1,4-glucan chains using ADP-glucose. This chain is Glycogen synthase, found in Pectobacterium atrosepticum (strain SCRI 1043 / ATCC BAA-672) (Erwinia carotovora subsp. atroseptica).